The primary structure comprises 712 residues: Anaerobic ribonucleoside-triphosphate reductase (712 aa).

The region spanning 3–92 (PHVMKRDGCK…EYRHDRDIQR (90 aa)) is the ATP-cone domain. A Glycine radical domain is found at 583 to 708 (KKVNPYDKID…VKRRVKHLGN (126 aa)). The Zn(2+) site is built by cysteine 644, cysteine 647, cysteine 662, and cysteine 665. Glycine 681 carries the post-translational modification Glycine radical.

This sequence belongs to the anaerobic ribonucleoside-triphosphate reductase family. Forms a tetramer composed of two NrdD and two NrdG subunits.

The catalysed reaction is a ribonucleoside 5'-triphosphate + formate + H(+) = a 2'-deoxyribonucleoside 5'-triphosphate + CO2 + H2O. Its activity is regulated as follows. Activated under anaerobic conditions by NrdG, a tightly associated activase. Activation involves the formation of a glycyl radical at Gly-681. Catalyzes the conversion of ribonucleotides into deoxyribonucleotides, which are required for DNA synthesis and repair. This Salmonella typhimurium (strain LT2 / SGSC1412 / ATCC 700720) protein is Anaerobic ribonucleoside-triphosphate reductase (nrdD).